We begin with the raw amino-acid sequence, 351 residues long: GDP-mannose 4,6-dehydratase (351 aa).

NADP(+) is bound by residues 11-16 (GVTGQD), 66-67 (DM), 88-92 (LAAQS), and tyrosine 103. Threonine 135 is a catalytic residue. Active-site nucleophile residues include glutamate 137 and tyrosine 159. NADP(+)-binding residues include lysine 163, histidine 189, and arginine 194.

It belongs to the NAD(P)-dependent epimerase/dehydratase family. GDP-mannose 4,6-dehydratase subfamily. NADP(+) is required as a cofactor.

It carries out the reaction GDP-alpha-D-mannose = GDP-4-dehydro-alpha-D-rhamnose + H2O. The protein operates within nucleotide-sugar biosynthesis; GDP-L-fucose biosynthesis via de novo pathway; GDP-L-fucose from GDP-alpha-D-mannose: step 1/2. In terms of biological role, catalyzes the conversion of GDP-D-mannose to GDP-4-dehydro-6-deoxy-D-mannose. This is GDP-mannose 4,6-dehydratase from Sinorhizobium fredii (strain HH103).